Consider the following 77-residue polypeptide: MIDLIGSKIKVLGHSDPSLIGREGIILFETKKTFLIQTQNKIIRVLKSNGIFEIYSENRKVILPGSKLVGRIEKRWL.

This sequence belongs to the eukaryotic/archaeal RNase P protein component 1 family. Consists of a catalytic RNA component and at least 4-5 protein subunits.

The protein resides in the cytoplasm. It carries out the reaction Endonucleolytic cleavage of RNA, removing 5'-extranucleotides from tRNA precursor.. Part of ribonuclease P, a protein complex that generates mature tRNA molecules by cleaving their 5'-ends. This chain is Ribonuclease P protein component 1, found in Sulfurisphaera tokodaii (strain DSM 16993 / JCM 10545 / NBRC 100140 / 7) (Sulfolobus tokodaii).